The chain runs to 190 residues: Peptidyl-tRNA hydrolase (190 aa).

Tyr-14 serves as a coordination point for tRNA. His-19 functions as the Proton acceptor in the catalytic mechanism. TRNA is bound by residues Tyr-64, Asn-66, and Asn-113.

This sequence belongs to the PTH family. Monomer.

The protein localises to the cytoplasm. The enzyme catalyses an N-acyl-L-alpha-aminoacyl-tRNA + H2O = an N-acyl-L-amino acid + a tRNA + H(+). In terms of biological role, hydrolyzes ribosome-free peptidyl-tRNAs (with 1 or more amino acids incorporated), which drop off the ribosome during protein synthesis, or as a result of ribosome stalling. Functionally, catalyzes the release of premature peptidyl moieties from peptidyl-tRNA molecules trapped in stalled 50S ribosomal subunits, and thus maintains levels of free tRNAs and 50S ribosomes. The chain is Peptidyl-tRNA hydrolase from Gemmatimonas aurantiaca (strain DSM 14586 / JCM 11422 / NBRC 100505 / T-27).